Reading from the N-terminus, the 380-residue chain is Glucose-1-phosphate adenylyltransferase (380 aa).

Alpha-D-glucose 1-phosphate contacts are provided by residues Gly-164, 179–180, and Ser-190; that span reads EK.

The protein belongs to the bacterial/plant glucose-1-phosphate adenylyltransferase family. Homotetramer.

The catalysed reaction is alpha-D-glucose 1-phosphate + ATP + H(+) = ADP-alpha-D-glucose + diphosphate. It functions in the pathway glycan biosynthesis; glycogen biosynthesis. Functionally, involved in the biosynthesis of ADP-glucose, a building block required for the elongation reactions to produce glycogen. Catalyzes the reaction between ATP and alpha-D-glucose 1-phosphate (G1P) to produce pyrophosphate and ADP-Glc. The sequence is that of Glucose-1-phosphate adenylyltransferase from Streptococcus pneumoniae (strain Hungary19A-6).